The sequence spans 407 residues: POC1 centriolar protein homolog A (407 aa).

WD repeat units follow at residues Gly-17–Arg-56, Gly-59–Val-98, Ala-101–Ser-140, Gln-143–Ser-182, Glu-185–His-224, Leu-227–Thr-266, and Gly-269–Gly-308. A disordered region spans residues Pro-317–Gln-357. Residues Gln-342–Gln-357 are compositionally biased toward polar residues. Residues Gln-369 to Asn-397 are a coiled coil.

Belongs to the WD repeat POC1 family. Interacts with POC1B.

It localises to the cytoplasm. It is found in the cytoskeleton. Its subcellular location is the microtubule organizing center. The protein resides in the centrosome. The protein localises to the centriole. It localises to the cilium basal body. It is found in the spindle pole. Its function is as follows. Plays an important role in centriole assembly and/or stability and ciliogenesis. Involved in early steps of centriole duplication, as well as in the later steps of centriole length control. Acts in concert with POC1B to ensure centriole integrity and proper mitotic spindle formation. The polypeptide is POC1 centriolar protein homolog A (POC1A) (Bos taurus (Bovine)).